The primary structure comprises 1782 residues: Vitellogenin receptor (1782 aa).

Residues 1-18 form the signal peptide; it reads MRFIVLLFICSFIYPCYV. At 19–1663 the chain is on the extracellular side; it reads SSIGFRRISK…SINFSRNTRN (1645 aa). LDL-receptor class A domains follow at residues 35–72, 81–118, and 122–157; these read KCED…FECD, TCAK…DGCV, and NCTN…WNCK. 6 disulfides stabilise this stretch: Cys-36/Cys-48, Cys-43/Cys-61, Cys-55/Cys-71, Cys-82/Cys-94, Cys-89/Cys-107, and Cys-101/Cys-117. An N-linked (GlcNAc...) asparagine glycan is attached at Asn-122. Intrachain disulfides connect Cys-123–Cys-134, Cys-129–Cys-147, and Cys-141–Cys-156. The N-linked (GlcNAc...) asparagine glycan is linked to Asn-159. Residues 166 to 205 enclose the LDL-receptor class A 4 domain; sequence SCKTENYQYMCANHRCISLKVVCDKKDDCGDGSDEGPGCT. 3 cysteine pairs are disulfide-bonded: Cys-167–Cys-181, Cys-176–Cys-194, and Cys-188–Cys-204. N-linked (GlcNAc...) asparagine glycosylation is found at Asn-208 and Asn-239. The 36-residue stretch at 208 to 243 folds into the EGF-like 1 domain; sequence NCSSAGCQSNCHQTPKGSVCTCKPGYKLQKDNRTCN. The EGF-like; calcium-binding domain occupies 244–283; it reads DIDECQAYGICDQDCMNVPGSYACTCQREYYLENDKRTCK. 3 cysteine pairs are disulfide-bonded: Cys-248–Cys-258, Cys-254–Cys-267, and Cys-269–Cys-282. 5 LDL-receptor class B repeats span residues 327 to 374, 375 to 416, 417 to 460, 461 to 501, and 502 to 544; these read DYVY…DWIT, KNIY…LPTQ, GKMY…DYPN, ERLY…TVFQ, and NKLY…DHSA. In terms of domain architecture, EGF-like 2 spans 552-588; it reads PCYSNPCSQLCMLNQNKGYTCGCTLDKKLNADKHTCQ. N-linked (GlcNAc...) asparagine glycosylation is found at Asn-702, Asn-859, Asn-896, and Asn-923. The 39-residue stretch at 889–927 folds into the EGF-like 3 domain; it reads DCQKNNGNCSHVCLPSLITSFICACPPGMELSNDNRTCI. LDL-receptor class A domains follow at residues 931 to 969, 973 to 1009, 1012 to 1049, 1052 to 1090, and 1094 to 1131; these read ECSK…SECR, RCKE…QNCE, KCKS…EDCR, ECTS…EKCY, and ACKM…VHCL. 15 disulfides stabilise this stretch: Cys-932–Cys-945, Cys-939–Cys-958, Cys-952–Cys-968, Cys-974–Cys-986, Cys-981–Cys-999, Cys-993–Cys-1008, Cys-1013–Cys-1026, Cys-1020–Cys-1039, Cys-1033–Cys-1048, Cys-1053–Cys-1065, Cys-1060–Cys-1078, Cys-1072–Cys-1089, Cys-1095–Cys-1108, Cys-1103–Cys-1121, and Cys-1115–Cys-1130. Residues Asn-1133 and Asn-1140 are each glycosylated (N-linked (GlcNAc...) asparagine). LDL-receptor class A domains are found at residues 1140–1177, 1178–1214, and 1225–1260; these read NCSL…QNCT, YCFE…KNCD, and ECDE…GKCQ. Cystine bridges form between Cys-1141–Cys-1154, Cys-1148–Cys-1167, Cys-1161–Cys-1176, Cys-1179–Cys-1191, Cys-1186–Cys-1204, Cys-1198–Cys-1213, Cys-1226–Cys-1236, Cys-1231–Cys-1249, and Cys-1243–Cys-1259. Asn-1175 carries N-linked (GlcNAc...) asparagine glycosylation. The EGF-like 4 domain maps to 1262-1298; the sequence is ACTVNNFCKGMCYKTPAGAVCGCQSGYRLAVDMISCE. LDL-receptor class B repeat units lie at residues 1385–1425, 1471–1518, and 1519–1561; these read DSVY…DWIT, RWLF…DHVK, and SKLY…FEQS. N-linked (GlcNAc...) asparagine glycosylation is found at Asn-1626, Asn-1640, and Asn-1656. Residues 1664-1684 traverse the membrane as a helical segment; sequence ISGIYSITIIVLLVSVLLLCV. Topologically, residues 1685–1782 are cytoplasmic; the sequence is YYYYQKNKLK…ALIYFVHNSK (98 aa).

Expressed in ovaries of reproductive females.

It localises to the membrane. Involved in uptake of vitellogenin by endocytosis. Expression is regulated by the juvenile hormone analog, methoprene (in vitro). This is Vitellogenin receptor from Solenopsis invicta (Red imported fire ant).